An 89-amino-acid polypeptide reads, in one-letter code: Defensin-like protein 147 (89 aa).

The signal sequence occupies residues 1-24 (MKKIFQLSFTVFIIFISLVLGVVG). 4 disulfides stabilise this stretch: cysteine 34–cysteine 82, cysteine 46–cysteine 66, cysteine 51–cysteine 79, and cysteine 55–cysteine 81.

It belongs to the DEFL family. In terms of tissue distribution, expressed in flower buds, but not in stems, roots or rosette leaves.

The protein resides in the secreted. The sequence is that of Defensin-like protein 147 (LCR1) from Arabidopsis thaliana (Mouse-ear cress).